The following is a 395-amino-acid chain: MSPVSRSRPNEDTLGSQKRRRFSESPPSALQTSRSPRGGGFGSLLSGPEGLQPPRGAQGVRPLHPISRPRSGERPLPLGIRTLACSSSPICGGYRYHHNYAGDPSWAEDQEKEKEESYRQRRLKERERIGELGAPEVWGLSPKIPEPDSDEHTPAEDEVKNQKSSSSDFTNEEKRTKTSHSTKKKRKKKPSKRKHKKYYDSSSDCHSSSDSDKKKVKTKKKEKKKKHRAKQLKKKRTKKEYNDISCKASERDLPEDAWMEQSMSAESMDLIGPEAPVIHTSQDEKPLNYGHALLPGEGAAMAEYVKAGKRIPRRGEIGLTSEEIASFECSGYVMSGSRHRRMEAVRLRKENQIYSADEKRALASFNQEERRKRENKILASFREMVYRKTKGKDDK.

2 disordered regions span residues 1-77 (MSPV…RPLP) and 91-247 (CGGY…ISCK). Residues Ser23 and Ser25 each carry the phosphoserine modification. The segment covering 25–35 (SPPSALQTSRS) has biased composition (polar residues). The span at 109–130 (DQEKEKEESYRQRRLKERERIG) shows a compositional bias: basic and acidic residues. The residue at position 149 (Ser149) is a Phosphoserine. The segment covering 150–161 (DEHTPAEDEVKN) has biased composition (basic and acidic residues). 2 stretches are compositionally biased toward basic residues: residues 177 to 197 (KTSH…KHKK) and 214 to 238 (KKVK…KRTK).

This sequence belongs to the NKAP family. As to quaternary structure, interacts with RBPJ, CIR1 and HDAC3. As to expression, specific to testis (at protein level). Detected in differenting spermatogonia and early spermatocytes (at protein level).

It is found in the nucleus. Transcriptional repressor of Notch-mediated signaling. Required for spermatogenesis. The chain is NKAP-like protein from Mus musculus (Mouse).